The primary structure comprises 108 residues: Histone H4 (108 aa).

The interval 1 to 36 (MSSAQSRGGKTGGKVGGKVGAKRHKKTQKEHINGIT) is disordered. The segment covering 9–19 (GKTGGKVGGKV) has biased composition (gly residues).

This sequence belongs to the histone H4 family. The nucleosome is a histone octamer containing two molecules each of H2A, H2B, H3 and H4 assembled in one H3-H4 heterotetramer and two H2A-H2B heterodimers. The octamer wraps approximately 147 bp of DNA.

Its subcellular location is the nucleus. It is found in the chromosome. In terms of biological role, core component of nucleosome. Nucleosomes wrap and compact DNA into chromatin, limiting DNA accessibility to the cellular machineries which require DNA as a template. Histones thereby play a central role in transcription regulation, DNA repair, DNA replication and chromosomal stability. DNA accessibility is regulated via a complex set of post-translational modifications of histones, also called histone code, and nucleosome remodeling. This chain is Histone H4 (H4a), found in Dictyostelium discoideum (Social amoeba).